A 476-amino-acid polypeptide reads, in one-letter code: Exodeoxyribonuclease 7 large subunit (476 aa).

The protein belongs to the XseA family. Heterooligomer composed of large and small subunits.

It is found in the cytoplasm. The enzyme catalyses Exonucleolytic cleavage in either 5'- to 3'- or 3'- to 5'-direction to yield nucleoside 5'-phosphates.. Bidirectionally degrades single-stranded DNA into large acid-insoluble oligonucleotides, which are then degraded further into small acid-soluble oligonucleotides. The polypeptide is Exodeoxyribonuclease 7 large subunit (Bartonella tribocorum (strain CIP 105476 / IBS 506)).